We begin with the raw amino-acid sequence, 524 residues long: Glutamyl-tRNA(Gln) amidotransferase subunit A (524 aa).

Active-site charge relay system residues include Lys-109 and Ser-184. The Acyl-ester intermediate role is filled by Ser-208.

Belongs to the amidase family. GatA subfamily. As to quaternary structure, heterotrimer of A, B and C subunits.

It carries out the reaction L-glutamyl-tRNA(Gln) + L-glutamine + ATP + H2O = L-glutaminyl-tRNA(Gln) + L-glutamate + ADP + phosphate + H(+). Its function is as follows. Allows the formation of correctly charged Gln-tRNA(Gln) through the transamidation of misacylated Glu-tRNA(Gln) in organisms which lack glutaminyl-tRNA synthetase. The reaction takes place in the presence of glutamine and ATP through an activated gamma-phospho-Glu-tRNA(Gln). The sequence is that of Glutamyl-tRNA(Gln) amidotransferase subunit A from Tropheryma whipplei (strain TW08/27) (Whipple's bacillus).